A 156-amino-acid polypeptide reads, in one-letter code: Small ribosomal subunit protein uS7 (156 aa).

It belongs to the universal ribosomal protein uS7 family. In terms of assembly, part of the 30S ribosomal subunit. Contacts proteins S9 and S11.

One of the primary rRNA binding proteins, it binds directly to 16S rRNA where it nucleates assembly of the head domain of the 30S subunit. Is located at the subunit interface close to the decoding center, probably blocks exit of the E-site tRNA. In Nitrobacter winogradskyi (strain ATCC 25391 / DSM 10237 / CIP 104748 / NCIMB 11846 / Nb-255), this protein is Small ribosomal subunit protein uS7.